We begin with the raw amino-acid sequence, 20 residues long: Thylakoid lumenal 20 kDa protein (20 aa).

The segment at 1–20 is disordered; it reads RDVDVGSFLPKSPSDPSMVL.

It localises to the plastid. The protein resides in the chloroplast thylakoid lumen. The protein is Thylakoid lumenal 20 kDa protein of Spinacia oleracea (Spinach).